The following is a 150-amino-acid chain: MLLDDLYEIVEPITADLGYILWGIEVVGSGKLTIRIFIDHENGVSVDDCQIVSKEISAVFDVEDPVSGKYILEVSSPGMNRQIFNIIQAQALVGFNVKAVTLAPVGSQTKFKGVLERVEGNSVILNLEDGKEISFDFDELKKLRVSPDFS.

Belongs to the RimP family.

The protein resides in the cytoplasm. Required for maturation of 30S ribosomal subunits. In Francisella tularensis subsp. mediasiatica (strain FSC147), this protein is Ribosome maturation factor RimP.